Here is a 117-residue protein sequence, read N- to C-terminus: NADH-ubiquinone oxidoreductase chain 3 (117 aa).

The next 3 helical transmembrane spans lie at 4–24, 61–81, and 86–106; these read FLGI…LLGL, LVAI…PWAL, and IGYF…VGFI.

This sequence belongs to the complex I subunit 3 family.

Its subcellular location is the mitochondrion membrane. It carries out the reaction a ubiquinone + NADH + 5 H(+)(in) = a ubiquinol + NAD(+) + 4 H(+)(out). Functionally, core subunit of the mitochondrial membrane respiratory chain NADH dehydrogenase (Complex I) that is believed to belong to the minimal assembly required for catalysis. Complex I functions in the transfer of electrons from NADH to the respiratory chain. The immediate electron acceptor for the enzyme is believed to be ubiquinone. The sequence is that of NADH-ubiquinone oxidoreductase chain 3 (NAD3) from Prototheca wickerhamii.